The sequence spans 396 residues: Protein ANTAGONIST OF LIKE HETEROCHROMATIN PROTEIN 1 (396 aa).

2 stretches are compositionally biased toward basic residues: residues M1–K12 and K20–R29. A disordered region spans residues M1 to R29. A Nuclear localization signal motif is present at residues Q6–K13. The DDE Tnp4 domain occupies I183–N348.

It belongs to the HARBI1 family. Interacts with core components of POLYCOMB REPRESSIVE COMPLEX 2 (PRC2), a PcG protein complex with H3K27me3 histone methyltransferase activity. Associates with plant-specific PRC2 accessory components such as MSI1, EMF2, VRN2, FIE and CLF. The cofactor is a divalent metal cation. As to expression, expressed in roots, inflorescence stems, seedlings, leaves, flower buds, inflorescences, and siliques.

It is found in the nucleus. In terms of biological role, transposase-derived protein that may have nuclease activity. Antagonist of polycomb-group (PcG) protein-mediated chromatin silencing, probably by preventing the association of POLYCOMB REPRESSIVE COMPLEX 2 (PRC2) with its accessory components. Needed for full reactivation of several floral homeotic genes that are repressed by PcG. The chain is Protein ANTAGONIST OF LIKE HETEROCHROMATIN PROTEIN 1 from Arabidopsis thaliana (Mouse-ear cress).